We begin with the raw amino-acid sequence, 320 residues long: ATP-dependent 6-phosphofructokinase (320 aa).

G12 is a binding site for ATP. ADP contacts are provided by residues 22-26 (RGVVR) and 55-60 (RYSVSD). ATP-binding positions include 73 to 74 (RF) and 103 to 106 (GDGS). A Mg(2+)-binding site is contributed by D104. 126 to 128 (TID) is a substrate binding site. D128 functions as the Proton acceptor in the catalytic mechanism. R155 is an ADP binding site. Residues R163 and 170–172 (MGR) contribute to the substrate site. Residues 186–188 (GCE), K212, and 214–216 (KKH) contribute to the ADP site. Residues E223, R244, and 250 to 253 (HIQR) each bind substrate.

Belongs to the phosphofructokinase type A (PFKA) family. ATP-dependent PFK group I subfamily. Prokaryotic clade 'B1' sub-subfamily. As to quaternary structure, homotetramer. The cofactor is Mg(2+).

The protein localises to the cytoplasm. It carries out the reaction beta-D-fructose 6-phosphate + ATP = beta-D-fructose 1,6-bisphosphate + ADP + H(+). Its pathway is carbohydrate degradation; glycolysis; D-glyceraldehyde 3-phosphate and glycerone phosphate from D-glucose: step 3/4. With respect to regulation, allosterically activated by ADP and other diphosphonucleosides, and allosterically inhibited by phosphoenolpyruvate. Its function is as follows. Catalyzes the phosphorylation of D-fructose 6-phosphate to fructose 1,6-bisphosphate by ATP, the first committing step of glycolysis. The sequence is that of ATP-dependent 6-phosphofructokinase from Sodalis glossinidius (strain morsitans).